The sequence spans 594 residues: Actin-histidine N-methyltransferase (594 aa).

Positions 1–22 (MGKKSRVKTQKSGTGATATVSP) are disordered. A compositionally biased stretch (polar residues) spans 10–20 (QKSGTGATATV). S-adenosyl-L-methionine contacts are provided by residues Arg75, 104-106 (EGF), Arg254, 275-279 (DMCNH), and 325-327 (SGF). The 221-residue stretch at 94–314 (EGFEMVNFKE…AGEQIYIFYG (221 aa)) folds into the SET domain. Ser513 bears the Phosphoserine mark. The tract at residues 549-594 (ENGLVNGENSIPNGTRSENESLNQESKRAVEDAKGSSSDSTAGVKE) is disordered. Residues 555 to 572 (GENSIPNGTRSENESLNQ) are compositionally biased toward polar residues. The span at 573–582 (ESKRAVEDAK) shows a compositional bias: basic and acidic residues. Residues 583-594 (GSSSDSTAGVKE) are compositionally biased toward polar residues.

The protein belongs to the class V-like SAM-binding methyltransferase superfamily. SETD3 actin-histidine methyltransferase family. In terms of assembly, interacts with MYOD1. Phosphorylated by GSK3B, which is required for recognition by the SCF(FBXW7) complex and subsequent degradation. Post-translationally, ubiquitinated by the SCF(FBXW7) complex following phosphorylation by GSK3B, leading to its degradation by the proteasome.

Its subcellular location is the cytoplasm. It is found in the nucleus. The catalysed reaction is L-histidyl-[protein] + S-adenosyl-L-methionine = N(tele)-methyl-L-histidyl-[protein] + S-adenosyl-L-homocysteine + H(+). In terms of biological role, protein-histidine N-methyltransferase that specifically mediates 3-methylhistidine (tele-methylhistidine) methylation of actin at 'His-73'. Histidine methylation of actin is required for smooth muscle contraction of the laboring uterus during delivery. Does not have protein-lysine N-methyltransferase activity and probably only catalyzes histidine methylation of actin. This Homo sapiens (Human) protein is Actin-histidine N-methyltransferase.